We begin with the raw amino-acid sequence, 451 residues long: Charged multivesicular body protein 7 (451 aa).

Residues 1 to 22 form a disordered region; it reads MWSPEREAQAPTGGDPAGLLPP. Position 232 is a phosphoserine (Ser232). Residues 248–312 adopt a coiled-coil conformation; sequence EQLLSRKVES…DTVQGILDRI (65 aa). A Phosphothreonine modification is found at Thr409. Residues Ser411, Ser432, and Ser442 each carry the phosphoserine modification. The interval 431–451 is disordered; that stretch reads LSEGGLIPSSKSPKRQLEPTL.

The protein belongs to the SNF7 family. Interacts with CHMP4B, but not with VPS25. Interacts with LEMD2 (via C-terminus).

The protein resides in the cytoplasm. It localises to the nucleus envelope. ESCRT-III-like protein required to recruit the ESCRT-III complex to the nuclear envelope (NE) during late anaphase. Together with SPAST, the ESCRT-III complex promotes NE sealing and mitotic spindle disassembly during late anaphase. Recruited to the reforming NE during anaphase by LEMD2. Plays a role in the endosomal sorting pathway. The chain is Charged multivesicular body protein 7 (Chmp7) from Mus musculus (Mouse).